The sequence spans 49 residues: Glutathione peroxidase (49 aa).

Belongs to the glutathione peroxidase family.

It catalyses the reaction 2 glutathione + H2O2 = glutathione disulfide + 2 H2O. Inhibited by Cu(2+), SDS and DTT. Activity is slightly increased by Fe(2+), Mn(2+), triton X-100 and EDTA. Functionally, glutathione peroxidase which may protect the cell from oxidative damage. The chain is Glutathione peroxidase from Lactiplantibacillus plantarum (Lactobacillus plantarum).